Consider the following 332-residue polypeptide: DGAT1/2-independent enzyme synthesizing storage lipids (332 aa).

Residues 1–10 (MIGSNESSTE) lie on the Lumenal side of the membrane. Asparagine 5 is a glycosylation site (N-linked (GlcNAc...) asparagine). Residues 11–31 (GPIPTSYLSFLAYLLGEWTGV) traverse the membrane as a helical segment. The Cytoplasmic segment spans residues 32–45 (EHTEDYLSYGAYLS). Residues 46–66 (WVLFPLAIVFILPVAIFFFCF) traverse the membrane as a helical segment. Residues 67–332 (NTSLLLLHIY…ERFQTRQKED (266 aa)) lie on the Lumenal side of the membrane. Residue histidine 132 is part of the active site. N-linked (GlcNAc...) asparagine glycosylation occurs at asparagine 289.

It belongs to the diacylglycerol acyltransferase family. Highly divergent.

The protein localises to the endoplasmic reticulum membrane. It catalyses the reaction a 1,2-diacylglycerol + a 1,2-diacyl-sn-glycero-3-phosphocholine = a triacylglycerol + a 1-acyl-sn-glycero-3-phosphocholine. The catalysed reaction is a 1-O-alkyl-2-acyl-sn-glycero-3-phosphocholine + a 1,2-diacylglycerol = a 1-O-alkyl-sn-glycero-3-phosphocholine + a triacylglycerol. It carries out the reaction a 2-acylglycerol + an acyl-CoA = a 1,2-diacylglycerol + CoA. The enzyme catalyses an acyl-CoA + a 1,2-diacyl-sn-glycerol = a triacyl-sn-glycerol + CoA. It catalyses the reaction 2-(9Z-octadecenoyl)-glycerol + (9Z)-octadecenoyl-CoA = 1,2-di-(9Z-octadecenoyl)-glycerol + CoA. The catalysed reaction is 1,2-di-(9Z-octadecenoyl)-sn-glycerol + (9Z)-octadecenoyl-CoA = 1,2,3-tri-(9Z-octadecenoyl)-glycerol + CoA. In terms of biological role, catalytic subunit of the alternative triglyceride biosynthesis pathway, which mediates formation of triacylglycerol from diacylglycerol and membrane phospholipids. Synthesizes triacylglycerol at the expense of membrane phospholipids, such as phosphatidylcholine (PC) and its ether-linked form (ePC), thereby altering the composition of membranes. The alternative triglyceride biosynthesis pathway is probably required to provide the energy required for rapid growth when fuel sources are limiting. It maintains mitochondrial function during periods of extracellular lipid starvation. Can also use acyl-CoA as donor: acts as a acyl-CoA:monoacylglycerol acyltransferase (MGAT), but also shows acyl-CoA:diacylglycerol acyltransferase (DGAT) activity. The protein is DGAT1/2-independent enzyme synthesizing storage lipids (TMEM68) of Gallus gallus (Chicken).